A 391-amino-acid chain; its full sequence is Small ribosomal subunit protein mS29 (391 aa).

The transit peptide at Met-1 to Pro-17 directs the protein to the mitochondrion. The interval Asn-30–Gln-59 is disordered. Residues Ser-45–Gln-59 show a composition bias toward basic and acidic residues. N6-acetyllysine occurs at positions 168 and 200.

The protein belongs to the mitochondrion-specific ribosomal protein mS29 family. Component of the mitochondrial ribosome small subunit (28S) which comprises a 12S rRNA and about 30 distinct proteins. Interacts with DELE1. Interacts with NOA1.

Its subcellular location is the mitochondrion. It carries out the reaction GTP + H2O = GDP + phosphate + H(+). As a component of the mitochondrial small ribosomal subunit, it plays a role in the translation of mitochondrial mRNAs. Involved in mediating interferon-gamma-induced cell death. Displays GTPase activity in vitro. This is Small ribosomal subunit protein mS29 from Mus musculus (Mouse).